Consider the following 275-residue polypeptide: NH(3)-dependent NAD(+) synthetase (275 aa).

Residue 46–53 participates in ATP binding; sequence GISGGQDS. Asp52 is a binding site for Mg(2+). Arg140 lines the deamido-NAD(+) pocket. Thr160 contributes to the ATP binding site. Glu165 provides a ligand contact to Mg(2+). 2 residues coordinate deamido-NAD(+): Lys173 and Asp180. ATP-binding residues include Lys189 and Thr211. Residue 260–261 participates in deamido-NAD(+) binding; that stretch reads HK.

It belongs to the NAD synthetase family. In terms of assembly, homodimer.

The enzyme catalyses deamido-NAD(+) + NH4(+) + ATP = AMP + diphosphate + NAD(+) + H(+). It participates in cofactor biosynthesis; NAD(+) biosynthesis; NAD(+) from deamido-NAD(+) (ammonia route): step 1/1. Its function is as follows. Catalyzes the ATP-dependent amidation of deamido-NAD to form NAD. Uses ammonia as a nitrogen source. The chain is NH(3)-dependent NAD(+) synthetase from Escherichia coli O8 (strain IAI1).